Here is a 306-residue protein sequence, read N- to C-terminus: Acetyl-coenzyme A carboxylase carboxyl transferase subunit beta (306 aa).

The CoA carboxyltransferase N-terminal domain occupies 25–294 (LWIKDPTSGE…VVNPSNTSST (270 aa)). The segment covering 287–296 (NPSNTSSTNS) has biased composition (low complexity). The interval 287-306 (NPSNTSSTNSQASLSKAEAA) is disordered.

It belongs to the AccD/PCCB family. Acetyl-CoA carboxylase is a heterohexamer composed of biotin carboxyl carrier protein (AccB), biotin carboxylase (AccC) and two subunits each of ACCase subunit alpha (AccA) and ACCase subunit beta (AccD).

The protein localises to the cytoplasm. The catalysed reaction is N(6)-carboxybiotinyl-L-lysyl-[protein] + acetyl-CoA = N(6)-biotinyl-L-lysyl-[protein] + malonyl-CoA. It functions in the pathway lipid metabolism; malonyl-CoA biosynthesis; malonyl-CoA from acetyl-CoA: step 1/1. Its function is as follows. Component of the acetyl coenzyme A carboxylase (ACC) complex. Biotin carboxylase (BC) catalyzes the carboxylation of biotin on its carrier protein (BCCP) and then the CO(2) group is transferred by the transcarboxylase to acetyl-CoA to form malonyl-CoA. This is Acetyl-coenzyme A carboxylase carboxyl transferase subunit beta from Bartonella henselae (strain ATCC 49882 / DSM 28221 / CCUG 30454 / Houston 1) (Rochalimaea henselae).